Consider the following 70-residue polypeptide: MADNADDLFQIPKNFYKEGSHFIKRCVKPDRKEFLSISKAVATGFVLMGLIGYIIKLIHIPINKVLVGGA.

The Cytoplasmic portion of the chain corresponds to 1 to 33 (MADNADDLFQIPKNFYKEGSHFIKRCVKPDRKE). The chain crosses the membrane as a helical span at residues 34-62 (FLSISKAVATGFVLMGLIGYIIKLIHIPI). The Extracellular portion of the chain corresponds to 63-70 (NKVLVGGA).

The protein belongs to the SecE/SEC61-gamma family. In terms of assembly, heterotrimeric complex composed of SEC61-alpha, SEC61-beta and SEC61-gamma.

It localises to the endoplasmic reticulum membrane. In terms of biological role, necessary for protein translocation in the endoplasmic reticulum. In Schizosaccharomyces pombe (strain 972 / ATCC 24843) (Fission yeast), this protein is Probable protein transport protein Sec61 subunit gamma (sss1).